The following is a 418-amino-acid chain: 3-isopropylmalate dehydratase large subunit (418 aa).

[4Fe-4S] cluster contacts are provided by cysteine 298, cysteine 358, and cysteine 361.

It belongs to the aconitase/IPM isomerase family. LeuC type 2 subfamily. In terms of assembly, heterodimer of LeuC and LeuD. The cofactor is [4Fe-4S] cluster.

It catalyses the reaction (2R,3S)-3-isopropylmalate = (2S)-2-isopropylmalate. The protein operates within amino-acid biosynthesis; L-leucine biosynthesis; L-leucine from 3-methyl-2-oxobutanoate: step 2/4. Functionally, catalyzes the isomerization between 2-isopropylmalate and 3-isopropylmalate, via the formation of 2-isopropylmaleate. This is 3-isopropylmalate dehydratase large subunit from Thermoanaerobacter sp. (strain X514).